Reading from the N-terminus, the 22-residue chain is uncharacterized protein (22 aa).

The tract at residues Met-1–Gly-22 is disordered.

This is an uncharacterized protein from Lactobacillus helveticus (Lactobacillus suntoryeus).